Here is a 197-residue protein sequence, read N- to C-terminus: uncharacterized protein (197 aa).

Disordered regions lie at residues 1–30 (MSDD…PKVV) and 115–174 (PSLK…KQEL). Residues 21 to 30 (KPTSTTPKVV) are compositionally biased toward low complexity. The span at 123–137 (KVDEDDDQIYEDKEE) shows a compositional bias: acidic residues. The span at 157–170 (KSNKKVAPKQKKKS) shows a compositional bias: basic residues.

This is an uncharacterized protein from Dictyostelium discoideum (Social amoeba).